Reading from the N-terminus, the 557-residue chain is Formate--tetrahydrofolate ligase (557 aa).

66-73 (TPAGEGKS) is a binding site for ATP.

Belongs to the formate--tetrahydrofolate ligase family.

The catalysed reaction is (6S)-5,6,7,8-tetrahydrofolate + formate + ATP = (6R)-10-formyltetrahydrofolate + ADP + phosphate. It participates in one-carbon metabolism; tetrahydrofolate interconversion. This Clostridium botulinum (strain Kyoto / Type A2) protein is Formate--tetrahydrofolate ligase.